The following is a 193-amino-acid chain: Segregation and condensation protein B (193 aa).

It belongs to the ScpB family. As to quaternary structure, homodimer. Homodimerization may be required to stabilize the binding of ScpA to the Smc head domains. Component of a cohesin-like complex composed of ScpA, ScpB and the Smc homodimer, in which ScpA and ScpB bind to the head domain of Smc. The presence of the three proteins is required for the association of the complex with DNA.

It is found in the cytoplasm. Its function is as follows. Participates in chromosomal partition during cell division. May act via the formation of a condensin-like complex containing Smc and ScpA that pull DNA away from mid-cell into both cell halves. The polypeptide is Segregation and condensation protein B (Clostridium botulinum (strain Kyoto / Type A2)).